The primary structure comprises 184 residues: Peptide deformylase (184 aa).

Cys-111 and His-154 together coordinate Fe cation. Glu-155 is a catalytic residue. Fe cation is bound at residue His-158.

It belongs to the polypeptide deformylase family. Fe(2+) serves as cofactor.

It catalyses the reaction N-terminal N-formyl-L-methionyl-[peptide] + H2O = N-terminal L-methionyl-[peptide] + formate. Functionally, removes the formyl group from the N-terminal Met of newly synthesized proteins. Requires at least a dipeptide for an efficient rate of reaction. N-terminal L-methionine is a prerequisite for activity but the enzyme has broad specificity at other positions. The chain is Peptide deformylase from Lactobacillus helveticus (strain DPC 4571).